The sequence spans 498 residues: tRNA-2-methylthio-N(6)-dimethylallyladenosine synthase (498 aa).

Residues 2 to 118 (PRYSITTFGC…LPGLLGDLAI (117 aa)) enclose the MTTase N-terminal domain. Positions 11, 47, 81, 163, 167, and 170 each coordinate [4Fe-4S] cluster. Residues 149–393 (PRAAPTAFVT…FEESEALLAA (245 aa)) enclose the Radical SAM core domain. Positions 396-467 (SALVGTTQEV…KHSLQAELTE (72 aa)) constitute a TRAM domain. The disordered stretch occupies residues 469–498 (ARAAARPRQRGGLEPRPARRSLPVVAAEGG).

It belongs to the methylthiotransferase family. MiaB subfamily. Monomer. It depends on [4Fe-4S] cluster as a cofactor.

The protein resides in the cytoplasm. The enzyme catalyses N(6)-dimethylallyladenosine(37) in tRNA + (sulfur carrier)-SH + AH2 + 2 S-adenosyl-L-methionine = 2-methylsulfanyl-N(6)-dimethylallyladenosine(37) in tRNA + (sulfur carrier)-H + 5'-deoxyadenosine + L-methionine + A + S-adenosyl-L-homocysteine + 2 H(+). Functionally, catalyzes the methylthiolation of N6-(dimethylallyl)adenosine (i(6)A), leading to the formation of 2-methylthio-N6-(dimethylallyl)adenosine (ms(2)i(6)A) at position 37 in tRNAs that read codons beginning with uridine. The polypeptide is tRNA-2-methylthio-N(6)-dimethylallyladenosine synthase (Sorangium cellulosum (strain So ce56) (Polyangium cellulosum (strain So ce56))).